A 369-amino-acid chain; its full sequence is Tyrosinase-like protein orsC (369 aa).

A signal peptide spans 1-23 (MLAFNPLVTALAALIFLFCQANA). Cu cation is bound by residues H112 and H121. N165, N179, N253, and N272 each carry an N-linked (GlcNAc...) asparagine glycan. H315 contributes to the Cu cation binding site.

It participates in secondary metabolite biosynthesis. In terms of biological role, tyrosinase-like protein; part of the gene cluster that mediates the biosynthesis of orsellinic acid, as well as of the cathepsin K inhibitors F9775 A and F9775 B. The non-reducing polyketide synthase orsA produces orsellinic acid by condensing acetyl-CoA with 3 malonyl-CoA units. Further modifications by the decarboxylase orsB and the tyrosinase-like protein orsC lead to the production of F9775 A and F9775 B. The functions of orsD and orsE remain unclear since only orsB and orsC are required to convert orsellinic acid into F9775 A and F9775 B. This chain is Tyrosinase-like protein orsC, found in Emericella nidulans (strain FGSC A4 / ATCC 38163 / CBS 112.46 / NRRL 194 / M139) (Aspergillus nidulans).